Reading from the N-terminus, the 188-residue chain is Threonylcarbamoyl-AMP synthase (188 aa).

The YrdC-like domain occupies 3–188; that stretch reads QLHPSDIKDI…RSGKILRNGQ (186 aa).

It belongs to the SUA5 family. TsaC subfamily.

The protein localises to the cytoplasm. The catalysed reaction is L-threonine + hydrogencarbonate + ATP = L-threonylcarbamoyladenylate + diphosphate + H2O. Functionally, required for the formation of a threonylcarbamoyl group on adenosine at position 37 (t(6)A37) in tRNAs that read codons beginning with adenine. Catalyzes the conversion of L-threonine, HCO(3)(-)/CO(2) and ATP to give threonylcarbamoyl-AMP (TC-AMP) as the acyladenylate intermediate, with the release of diphosphate. In Shewanella baltica (strain OS155 / ATCC BAA-1091), this protein is Threonylcarbamoyl-AMP synthase.